The chain runs to 613 residues: Laccase 1 (613 aa).

Positions 1-20 are cleaved as a signal peptide; it reads MSSSVRLLLIVALLYTNSWA. Plastocyanin-like domains follow at residues 29 to 142, 171 to 359, and 468 to 598; these read ITWE…IRPK, YLVV…MRVP, and DATC…ILDG. N-linked (GlcNAc...) asparagine glycosylation occurs at N74. Cu cation is bound by residues H78, H80, H122, and H124. Residues N256, N279, and N484 are each glycosylated (N-linked (GlcNAc...) asparagine). 3 residues coordinate Cu cation: H506, H509, and H511. Residue N526 is glycosylated (N-linked (GlcNAc...) asparagine). Cu cation is bound by residues H580, C581, H582, and H586.

This sequence belongs to the multicopper oxidase family. Cu cation is required as a cofactor.

Its subcellular location is the cell surface. The protein operates within pigment biosynthesis. Its function is as follows. Laccase; part of the Pks1 gene cluster that mediates the biosynthesis of an anthraquinone derivative pigment that contributes to conidial pigmentation that provides protection from UV radiation, heat and cold stress. The polyketide synthase Pks1 produces 1-acetyl-2,4,6,8-tetrahydroxy-9,10-anthraquinone though condensation of acetyl-CoA with malonyl-CoA. The dehydratase EthD and the laccase Mlac1 further convert the anthraquinone derivative into the final conidial pigment. The chain is Laccase 1 from Metarhizium acridum (strain CQMa 102).